Here is a 494-residue protein sequence, read N- to C-terminus: Rho GTPase-activating protein 19 (494 aa).

A2 is subject to N-acetylalanine. 2 positions are modified to phosphoserine: S7 and S31. A Rho-GAP domain is found at 102–308 (MSLKRKEKGV…FMIKHSQKLF (207 aa)). The disordered stretch occupies residues 399–451 (QSLTQTPGREPSTPRVQKRARSRSFSGLIKRKVLGSQMTSEKKNSSPAPESVA). Phosphoserine is present on residues S422, S438, and S470. Position 478 is a phosphothreonine (T478).

In terms of biological role, GTPase activator for the Rho-type GTPases by converting them to an inactive GDP-bound state. The polypeptide is Rho GTPase-activating protein 19 (Arhgap19) (Mus musculus (Mouse)).